The primary structure comprises 375 residues: MQLQFRSWMLAALTLLVVFLIFADISEIEEEIGNSGGRGTIRSAVNSLHSKSNRAEVVINGSSSPAVVDRSNESIKHNIQPASSKWRHNQTLSLRIRKQILKFLDAEKDISVLKGTLKPGDIIHYIFDRDSTMNVSQNLYELLPRTSPLKNKHFGTCAIVGNSGVLLNSGCGQEIDAHSFVIRCNLAPVQEYARDVGLKTDLVTMNPSVIQRAFEDLVNATWREKLLQRLHSLNGSILWIPAFMARGGKERVEWVNELILKHHVNVRTAYPSLPLLHAVRGYWLTNKVHIKRPTTGLLMYTLATRFCNQIYLYGFWPFPLDQNQNPVKYHYYDSLKYGYTSQASPHTMPLEFKALKSLHEQGALKLTVGQCDGAT.

Residues 1–6 (MQLQFR) lie on the Cytoplasmic side of the membrane. A helical; Signal-anchor for type II membrane protein transmembrane segment spans residues 7-23 (SWMLAALTLLVVFLIFA). Residues 24–375 (DISEIEEEIG…LTVGQCDGAT (352 aa)) lie on the Lumenal side of the membrane. Residues asparagine 60, asparagine 72, asparagine 89, and asparagine 134 are each glycosylated (N-linked (GlcNAc...) asparagine). 2 disulfides stabilise this stretch: cysteine 157–cysteine 307 and cysteine 171–cysteine 371. Residues asparagine 162 and asparagine 185 each coordinate CMP-N-acetyl-beta-neuraminate. N-linked (GlcNAc...) asparagine glycosylation is found at asparagine 219 and asparagine 234. 6 residues coordinate CMP-N-acetyl-beta-neuraminate: threonine 294, threonine 295, glycine 296, tryptophan 316, tyrosine 329, and histidine 330. Histidine 346 (proton donor/acceptor) is an active-site residue.

This sequence belongs to the glycosyltransferase 29 family. Autopolysialylated. Autopolysialylation is not a prerequisite for the polysialylation acitity, but enhances the polysialylation acitity.

It is found in the golgi apparatus membrane. The protein resides in the secreted. Its subcellular location is the cell membrane. The enzyme catalyses [N-acetyl-alpha-D-neuraminosyl-(2-&gt;8)](n) + CMP-N-acetyl-beta-neuraminate = [N-acetyl-alpha-D-neuraminosyl-(2-&gt;8)](n+1) + CMP + H(+). Its pathway is protein modification; protein glycosylation. Functionally, catalyzes the transfer of a sialic acid from a CMP-linked sialic acid donor onto a terminal alpha-2,3-, alpha-2,6-, or alpha-2,8-linked sialic acid of an N-linked glycan acceptor through alpha-2,8-linkages. Therefore, participates in polysialic acid synthesis on various sialylated N-acetyllactosaminyl oligosaccharides (alpha-2,3-, alpha-2,6-, or alpha-2,8-linked sialic acid), including NCAM1, NCAM1 N-glycans, FETUB N-glycans, and to a lesser extent sialylparagloboside (SPG) and AHSG, which does not require the initial addition of an alpha 2,8-sialic acid. However, does not exhibit sialic acid-polymerase activity. Catalyzes polysialic acid synthesis in the hippocampal on NCAM1 and supports neurite outgrowth. ST8SIA2-mediated polysialylation influences on oligodendrocyte differentiation and may promote the integrity of myelin and axons. This chain is Alpha-2,8-sialyltransferase 8B, found in Pan troglodytes (Chimpanzee).